Reading from the N-terminus, the 145-residue chain is Basic phospholipase A2 cPt09 (145 aa).

A signal peptide spans 1–21 (MYPAHLLVLLAVCVSLLGAST). Positions 22-27 (IPPLPL) are excised as a propeptide. Disulfide bonds link C38/C98, C54/C144, C56/C72, C71/C125, C78/C118, C87/C111, and C105/C116. Residues Y55, G57, and G59 each coordinate Ca(2+). Residue H75 is part of the active site. D76 is a Ca(2+) binding site. D119 is an active-site residue.

The protein belongs to the phospholipase A2 family. Group I subfamily. D49 sub-subfamily. Ca(2+) serves as cofactor. As to expression, expressed by the venom gland.

Its subcellular location is the secreted. It catalyses the reaction a 1,2-diacyl-sn-glycero-3-phosphocholine + H2O = a 1-acyl-sn-glycero-3-phosphocholine + a fatty acid + H(+). PLA2 catalyzes the calcium-dependent hydrolysis of the 2-acyl groups in 3-sn-phosphoglycerides. This chain is Basic phospholipase A2 cPt09, found in Laticauda semifasciata (Black-banded sea krait).